Here is a 145-residue protein sequence, read N- to C-terminus: uncharacterized protein (145 aa).

The 68-residue stretch at 78 to 145 folds into the ACT domain; that stretch reads KLQIVAKDRI…DVVEKISILW (68 aa).

This is an uncharacterized protein from Methanocaldococcus jannaschii (strain ATCC 43067 / DSM 2661 / JAL-1 / JCM 10045 / NBRC 100440) (Methanococcus jannaschii).